The sequence spans 359 residues: DNA-directed RNA polymerase RPB3-11 homolog (359 aa).

It in the N-terminal section; belongs to the archaeal RpoD/eukaryotic RPB3 RNA polymerase subunit family. This sequence in the C-terminal section; belongs to the archaeal RpoL/eukaryotic RPB11/RPC19 RNA polymerase subunit family. Part of the viral DNA-directed RNA polymerase that consists of 8 polII-like subunits (RPB1, RPB2, RPB3, RPB5, RPB6, RPB7, RPB9, RPB10), a capping enzyme and a termination factor.

Its subcellular location is the host cytoplasm. It is found in the virion. Component of the DNA-directed RNA polymerase (RNAP) that catalyzes the transcription in the cytoplasm of viral DNA into RNA using the four ribonucleoside triphosphates as substrates. This Ornithodoros (relapsing fever ticks) protein is DNA-directed RNA polymerase RPB3-11 homolog.